A 197-amino-acid chain; its full sequence is DNA-directed RNA polymerases I, II, and III subunit rpabc1 (197 aa).

Belongs to the archaeal Rpo5/eukaryotic RPB5 RNA polymerase subunit family. In terms of assembly, component of the RNA polymerase I (Pol I), RNA polymerase II (Pol II) and RNA polymerase III (Pol III) complexes consisting of at least 13, 12 and 17 subunits, respectively. In RNA Pol II, this subunit is present in 2-fold molar excess over the other subunits.

Its subcellular location is the nucleus. Its function is as follows. DNA-dependent RNA polymerase catalyzes the transcription of DNA into RNA using the four ribonucleoside triphosphates as substrates. Common component of RNA polymerases I, II and III which synthesize ribosomal RNA precursors, mRNA precursors and many functional non-coding RNAs, and small RNAs, such as 5S rRNA and tRNAs, respectively. Pol II is the central component of the basal RNA polymerase II transcription machinery. Pols are composed of mobile elements that move relative to each other. In Pol II, RPB5 is part of the lower jaw surrounding the central large cleft and thought to grab the incoming DNA template. Seems to be the major component in this process. The polypeptide is DNA-directed RNA polymerases I, II, and III subunit rpabc1 (polr2e) (Dictyostelium discoideum (Social amoeba)).